The sequence spans 377 residues: uncharacterized protein (377 aa).

The chain crosses the membrane as a helical span at residues 21–43; the sequence is YFISFSALFLIAYMFVAAVPLGA.

The protein localises to the membrane. This is an uncharacterized protein from Treponema pallidum (strain Nichols).